The following is a 506-amino-acid chain: Phenylacetaldehyde synthase (506 aa).

L-phenylalanine-binding residues include P101, H202, and H317. K318 is modified (N6-(pyridoxal phosphate)lysine).

The protein belongs to the group II decarboxylase family. In terms of assembly, homotetramer. Requires pyridoxal 5'-phosphate as cofactor. In terms of tissue distribution, highly expressed in corolla limbs and at lower levels in corolla tubes and ovaries.

The catalysed reaction is L-phenylalanine + O2 + H2O + H(+) = 2-phenylacetaldehyde + H2O2 + NH4(+) + CO2. Its function is as follows. Bifunctional enzyme that catalyzes the decarboxylation of L-phenylalanine to 2-phenylethylamine, which is then oxidized to form 2-phenylacetaldehyde, a constituent of floral scent. 2-phenylacetaldehyde is a precursor of 2-phenylethanol, another constituent of floral scent. The sequence is that of Phenylacetaldehyde synthase from Petunia hybrida (Petunia).